We begin with the raw amino-acid sequence, 376 residues long: Growth/differentiation factor 8 (376 aa).

The signal sequence occupies residues Met1–Leu24. The propeptide occupies Asn25–Arg267. Asn72 is a glycosylation site (N-linked (GlcNAc...) asparagine). Intrachain disulfides connect Cys273–Cys283, Cys282–Cys341, Cys310–Cys373, and Cys314–Cys375.

This sequence belongs to the TGF-beta family. Homodimer; disulfide-linked. Interacts with WFIKKN2, leading to inhibit its activity. Interacts with FSTL3. Synthesized as large precursor molecule that undergoes proteolytic cleavage to generate an N-terminal propeptide and a disulfide linked C-terminal dimer, which is the biologically active molecule. The circulating form consists of a latent complex of the C-terminal dimer and other proteins, including its propeptide, which maintain the C-terminal dimer in a latent, inactive state. Ligand activation requires additional cleavage of the prodomain by a tolloid-like metalloproteinase. As to expression, expressed specifically in developing and adult skeletal muscle. Weak expression in adipose tissue.

The protein localises to the secreted. Its function is as follows. Acts specifically as a negative regulator of skeletal muscle growth. The polypeptide is Growth/differentiation factor 8 (Mstn) (Mus musculus (Mouse)).